We begin with the raw amino-acid sequence, 421 residues long: Testin (421 aa).

Residues 92–199 (MILTNPVAAK…GDVKLPRDMN (108 aa)) enclose the PET domain. Disordered stretches follow at residues 133–164 (EKQP…PSKC) and 193–213 (KLPR…GGDR). Positions 155–164 (PAHDQDPSKC) are enriched in basic and acidic residues. LIM zinc-binding domains lie at 234–297 (YSCY…CDSE), 299–359 (PRCA…NHAV), and 362–421 (QGCH…KMMS).

This sequence belongs to the prickle / espinas / testin family. As to quaternary structure, interacts via LIM domain 1 with ZYX. Interacts (via LIM domain 3) with ENAH and VASP. Interacts with ALKBH4, talin, actin, alpha-actinin, GRIP1 and PXN. Interacts (via LIM domain 2) with ACTL7A (via N-terminus). Heterodimer with ACTL7A; the heterodimer interacts with ENAH to form a heterotrimer.

Its subcellular location is the cytoplasm. The protein resides in the cell junction. It is found in the focal adhesion. Functionally, scaffold protein that may play a role in cell adhesion, cell spreading and in the reorganization of the actin cytoskeleton. Plays a role in the regulation of cell proliferation. May act as a tumor suppressor. The protein is Testin (TES) of Ovis aries (Sheep).